The chain runs to 163 residues: Nucleotide-binding protein Clos_1967 (163 aa).

The protein belongs to the YajQ family.

Nucleotide-binding protein. This chain is Nucleotide-binding protein Clos_1967, found in Alkaliphilus oremlandii (strain OhILAs) (Clostridium oremlandii (strain OhILAs)).